Consider the following 282-residue polypeptide: Heterogeneous nuclear ribonucleoprotein C (282 aa).

The region spanning Ser17–Glu88 is the RRM domain. Disordered regions lie at residues Ala131–Gly177 and Gln208–Ser282. A Nuclear localization signal motif is present at residues Pro141 to Val147. Over residues Ser161–Ser172 the composition is skewed to low complexity. Positions Gly177–Asp217 form a coiled coil. 2 stretches are compositionally biased toward basic and acidic residues: residues Gln208 to Asp217 and Leu224 to Glu235. 2 stretches are compositionally biased toward acidic residues: residues Glu236–Leu257 and Lys265–Ser282.

It belongs to the RRM HNRPC family. RALY subfamily. Tetramer.

It is found in the nucleus. Functionally, binds pre-mRNA and nucleates the assembly of 40S hnRNP particles. Interacts with poly-U tracts in the 3'-UTR or 5'-UTR of mRNA and modulates the stability and the level of translation of bound mRNA molecules. Single HNRNPC tetramers bind 230-240 nucleotides. Trimers of HNRNPC tetramers bind 700 nucleotides. May play a role in the early steps of spliceosome assembly and pre-mRNA splicing. N6-methyladenosine (m6A) has been shown to alter the local structure in mRNAs and long non-coding RNAs (lncRNAs) via a mechanism named 'm(6)A-switch', facilitating binding of HNRNPC, leading to regulation of mRNA splicing. The sequence is that of Heterogeneous nuclear ribonucleoprotein C (hnrnpc) from Xenopus laevis (African clawed frog).